The chain runs to 72 residues: Penaeidin-2a (72 aa).

Residues 1–21 (MRLVVCLVFLASFALVCQGEA) form the signal peptide. 3 disulfides stabilise this stretch: Cys-45-Cys-59, Cys-48-Cys-66, and Cys-60-Cys-67. Lys-71 is modified (lysine amide).

In terms of tissue distribution, higher expression in hemocytes and to a lesser extent in heart, testis, gills, intestine, lymphoid organ and hepatopancreas. Traces in eyes and subcuticular epithelium. Not present in the brain.

The protein localises to the cytoplasmic granule. Functionally, antibacterial activity against M.luteus and E.coli bacteria. Antifungal activity against N.crassa and F.oxysporum. Presents chitin-binding activity. The sequence is that of Penaeidin-2a from Penaeus vannamei (Whiteleg shrimp).